Reading from the N-terminus, the 251-residue chain is MRFDILTLFPEFFETPLRIGLVGKALQQGIAEVHCTNPRDFATDKHRRVDDEPYGGGVGMVLKPEPFFAAVASLPRLDPCEIILLTPQGQPLNQALLQELAQKAQLILLCGQYEGFDERIRQYLATREVSLGDFVLTGGEIPALALINGVVRLLPGTVGKVDSLKSESFQAGLLDYPQYTRPAEFQGHKVPPVLLSGDHQAIARWRLQQQLVRTWQRRPDLLAKRPLTAEEQQLLAEGLAEQHPGVNDVEK.

Residues glycine 111 and 131–136 (LGDFVL) contribute to the S-adenosyl-L-methionine site.

Belongs to the RNA methyltransferase TrmD family. As to quaternary structure, homodimer.

The protein resides in the cytoplasm. It carries out the reaction guanosine(37) in tRNA + S-adenosyl-L-methionine = N(1)-methylguanosine(37) in tRNA + S-adenosyl-L-homocysteine + H(+). Functionally, specifically methylates guanosine-37 in various tRNAs. This Synechococcus sp. (strain JA-2-3B'a(2-13)) (Cyanobacteria bacterium Yellowstone B-Prime) protein is tRNA (guanine-N(1)-)-methyltransferase.